Consider the following 244-residue polypeptide: CTD nuclear envelope phosphatase 1 (244 aa).

A helical membrane pass occupies residues 7–29; the sequence is LLGLRTFVAFAAKLWSFFIYLLR. In terms of domain architecture, FCP1 homology spans 57–224; the sequence is AQVKRKILVL…LNLLPMLDAL (168 aa).

Belongs to the dullard family. In terms of assembly, (Microbial infection) Interacts with Chandipura virus matrix protein. Interacts with CNEP1R1; the complex dephosphorylates LPIN1 and LPIN2. In terms of tissue distribution, muscle specific with lower expression in other metabolic tissues.

Its subcellular location is the endoplasmic reticulum membrane. It is found in the nucleus membrane. It carries out the reaction O-phospho-L-seryl-[protein] + H2O = L-seryl-[protein] + phosphate. The catalysed reaction is O-phospho-L-threonyl-[protein] + H2O = L-threonyl-[protein] + phosphate. Functionally, serine/threonine protein phosphatase forming with CNEP1R1 an active phosphatase complex that dephosphorylates and may activate LPIN1 and LPIN2. LPIN1 and LPIN2 are phosphatidate phosphatases that catalyze the conversion of phosphatidic acid to diacylglycerol and control the metabolism of fatty acids at different levels. May indirectly modulate the lipid composition of nuclear and/or endoplasmic reticulum membranes and be required for proper nuclear membrane morphology and/or dynamics. May also indirectly regulate the production of lipid droplets and triacylglycerol. May antagonize BMP signaling. This Homo sapiens (Human) protein is CTD nuclear envelope phosphatase 1 (CTDNEP1).